The following is a 277-amino-acid chain: Phosphatidylglycerol--prolipoprotein diacylglyceryl transferase (277 aa).

The next 4 membrane-spanning stretches (helical) occupy residues 22–42 (WYGV…LSEA), 51–71 (IIVD…RIYY), 89–109 (IWHG…TAII), and 116–136 (ISFW…QAIG). Position 137 (R137) interacts with a 1,2-diacyl-sn-glycero-3-phospho-(1'-sn-glycerol). The next 3 helical transmembrane spans lie at 177-197 (QPTF…LLII), 205-225 (GELF…IEGM), and 235-255 (FRVS…LIIY).

This sequence belongs to the Lgt family.

It is found in the cell membrane. It catalyses the reaction L-cysteinyl-[prolipoprotein] + a 1,2-diacyl-sn-glycero-3-phospho-(1'-sn-glycerol) = an S-1,2-diacyl-sn-glyceryl-L-cysteinyl-[prolipoprotein] + sn-glycerol 1-phosphate + H(+). Its pathway is protein modification; lipoprotein biosynthesis (diacylglyceryl transfer). Catalyzes the transfer of the diacylglyceryl group from phosphatidylglycerol to the sulfhydryl group of the N-terminal cysteine of a prolipoprotein, the first step in the formation of mature lipoproteins. The polypeptide is Phosphatidylglycerol--prolipoprotein diacylglyceryl transferase (Listeria welshimeri serovar 6b (strain ATCC 35897 / DSM 20650 / CCUG 15529 / CIP 8149 / NCTC 11857 / SLCC 5334 / V8)).